The chain runs to 268 residues: Uronate dehydrogenase (268 aa).

Residues 17 to 18 (GL), 37 to 39 (DIS), 55 to 56 (DL), and 75 to 79 (FGGVS) contribute to the NAD(+) site. Substrate is bound by residues Ser-79 and 115 to 117 (SNH). Residue Tyr-140 is the Proton acceptor of the active site. Lys-144 is a binding site for NAD(+). Residue Ser-169 coordinates substrate. Ser-170 contributes to the NAD(+) binding site. Residue Arg-178 participates in substrate binding.

Belongs to the NAD(P)-dependent epimerase/dehydratase family. Homohexamer.

It carries out the reaction beta-D-galacturonate + NAD(+) = D-galactaro-1,5-lactone + NADH + H(+). It catalyses the reaction beta-D-glucuronate + NAD(+) = D-glucaro-1,5-lactone + NADH + H(+). It participates in carbohydrate acid metabolism; D-galacturonate degradation via prokaryotic oxidative pathway. Functionally, catalyzes the oxidation of beta-D-galacturonate and beta-D-glucuronate to galactarate and D-glucarate, respectively. This is Uronate dehydrogenase (udh) from Pseudomonas putida (strain ATCC 47054 / DSM 6125 / CFBP 8728 / NCIMB 11950 / KT2440).